The sequence spans 154 residues: Protein X (154 aa).

Positions 68-117 (PCALRFTSARRMETTVNAHGNLPKVLHKRTLGLSAMSTTDLEAYFKDCVF) are mitochondrial targeting sequence.

The protein belongs to the orthohepadnavirus protein X family. As to quaternary structure, may form homodimer. May interact with host CEBPA, CFLAR, CREB1, DDB1, E4F1, HBXIP, HSPD1/HSP60, NFKBIA, POLR2E and SMAD4. Interacts with host SMC5-SMC6 complex and induces its degradation. Interacts with host TRPC4AP; leading to prevent ubiquitination of TRPC4AP. Interacts with host PLSCR1; this interaction promotes ubiquitination and degradation of HBx and impairs HBx-mediated cell proliferation. In terms of processing, a fraction may be phosphorylated in insect cells and HepG2 cells, a human hepatoblastoma cell line. Phosphorylated in vitro by host protein kinase C or mitogen-activated protein kinase. N-acetylated in insect cells.

The protein localises to the host cytoplasm. Its subcellular location is the host nucleus. The protein resides in the host mitochondrion. In terms of biological role, multifunctional protein that plays a role in silencing host antiviral defenses and promoting viral transcription. Does not seem to be essential for HBV infection. May be directly involved in development of cirrhosis and liver cancer (hepatocellular carcinoma). Most of cytosolic activities involve modulation of cytosolic calcium. The effect on apoptosis is controversial depending on the cell types in which the studies have been conducted. May induce apoptosis by localizing in mitochondria and causing loss of mitochondrial membrane potential. May also modulate apoptosis by binding host CFLAR, a key regulator of the death-inducing signaling complex (DISC). Promotes viral transcription by using the host E3 ubiquitin ligase DDB1 to target the SMC5-SMC6 complex to proteasomal degradation. This host complex would otherwise bind to viral episomal DNA, and prevents its transcription. Moderately stimulates transcription of many different viral and cellular transcription elements. Promoters and enhancers stimulated by HBx contain DNA binding sites for NF-kappa-B, AP-1, AP-2, c-EBP, ATF/CREB, or the calcium-activated factor NF-AT. The chain is Protein X from Hepatitis B virus genotype B/C subtype adw (isolate Okinawa/pODW282/1998) (HBV-B).